Reading from the N-terminus, the 431-residue chain is Light-independent protochlorophyllide reductase subunit N (431 aa).

[4Fe-4S] cluster-binding residues include Cys29, Cys54, and Cys114.

It belongs to the BchN/ChlN family. Protochlorophyllide reductase is composed of three subunits; ChlL, ChlN and ChlB. Forms a heterotetramer of two ChlB and two ChlN subunits. [4Fe-4S] cluster serves as cofactor.

Its subcellular location is the plastid. The protein localises to the chloroplast. The enzyme catalyses chlorophyllide a + oxidized 2[4Fe-4S]-[ferredoxin] + 2 ADP + 2 phosphate = protochlorophyllide a + reduced 2[4Fe-4S]-[ferredoxin] + 2 ATP + 2 H2O. It functions in the pathway porphyrin-containing compound metabolism; chlorophyll biosynthesis (light-independent). In terms of biological role, component of the dark-operative protochlorophyllide reductase (DPOR) that uses Mg-ATP and reduced ferredoxin to reduce ring D of protochlorophyllide (Pchlide) to form chlorophyllide a (Chlide). This reaction is light-independent. The NB-protein (ChlN-ChlB) is the catalytic component of the complex. The sequence is that of Light-independent protochlorophyllide reductase subunit N from Nephroselmis olivacea (Green alga).